The sequence spans 100 residues: Urease subunit gamma (100 aa).

It belongs to the urease gamma subunit family. Heterotrimer of UreA (gamma), UreB (beta) and UreC (alpha) subunits. Three heterotrimers associate to form the active enzyme.

Its subcellular location is the cytoplasm. The catalysed reaction is urea + 2 H2O + H(+) = hydrogencarbonate + 2 NH4(+). It participates in nitrogen metabolism; urea degradation; CO(2) and NH(3) from urea (urease route): step 1/1. This chain is Urease subunit gamma, found in Haemophilus influenzae (strain PittEE).